The sequence spans 133 residues: Profilin-1 (133 aa).

It belongs to the profilin family. Occurs in many kinds of cells as a complex with monomeric actin in a 1:1 ratio. In terms of tissue distribution, ubiquitous.

It localises to the cytoplasm. The protein resides in the cytoskeleton. Functionally, binds to actin and affects the structure of the cytoskeleton. At high concentrations, profilin prevents the polymerization of actin, whereas it enhances it at low concentrations. By binding to PIP2, it inhibits the formation of IP3 and DG. This Solanum lycopersicum (Tomato) protein is Profilin-1 (PRO1).